The primary structure comprises 244 residues: MGRAFEYRRASKEARWGKMSKLFPKLGKSITMAAKEGGPDPDMNPKLRTAIATAKAQNMPKDNIDAAIKRASGKDAADIKIIHYDGKAPHGALLIIECASDNSTRTVANIKSILNKGNGEFLPNGSLTFMFSRKSVFEVEYPKRDLEAVELDLIDYGLTEMEENEFENDKGEIEKTLTIYGDYESFGTLNEGIEKLGLTIKSGNLQFVANNFVEFADEDLKEIEELIEKLEDDDDVQAVYTNIK.

This sequence belongs to the TACO1 family.

It localises to the cytoplasm. This is Probable transcriptional regulatory protein CHAB381_1426 from Campylobacter hominis (strain ATCC BAA-381 / DSM 21671 / CCUG 45161 / LMG 19568 / NCTC 13146 / CH001A).